Reading from the N-terminus, the 305-residue chain is Protein MFI (305 aa).

Can homodimerize. Interacts with MFF; the interaction inhibits MFF interaction with DNM1L.

It localises to the cytoplasm. It is found in the cytosol. The protein localises to the mitochondrion outer membrane. Acts as an inhibitor of mitochondrial fission. Interacts with MFF and prevents DNM1L recruitment to mitochondria, promoting a more fused mitochondrial network. The chain is Protein MFI from Rattus norvegicus (Rat).